We begin with the raw amino-acid sequence, 359 residues long: 3-dehydroquinate synthase (359 aa).

NAD(+) is bound by residues 71–76 (DGEAYK), 105–109 (GVIGD), 129–130 (TT), Lys-142, and Lys-151. Glu-184, His-247, and His-264 together coordinate Zn(2+).

Belongs to the sugar phosphate cyclases superfamily. Dehydroquinate synthase family. The cofactor is Co(2+). Zn(2+) is required as a cofactor. It depends on NAD(+) as a cofactor.

It is found in the cytoplasm. The catalysed reaction is 7-phospho-2-dehydro-3-deoxy-D-arabino-heptonate = 3-dehydroquinate + phosphate. It participates in metabolic intermediate biosynthesis; chorismate biosynthesis; chorismate from D-erythrose 4-phosphate and phosphoenolpyruvate: step 2/7. Catalyzes the conversion of 3-deoxy-D-arabino-heptulosonate 7-phosphate (DAHP) to dehydroquinate (DHQ). The sequence is that of 3-dehydroquinate synthase from Burkholderia vietnamiensis (strain G4 / LMG 22486) (Burkholderia cepacia (strain R1808)).